Consider the following 693-residue polypeptide: Polyribonucleotide nucleotidyltransferase (693 aa).

2 residues coordinate Mg(2+): D486 and D492. One can recognise a KH domain in the interval 553 to 612 (PRFTTLKIHPDKIRDVIGKGGATIRALTEETGTSIDISDDGTVKIASVDKAAGDEARRRI). The S1 motif domain occupies 622-690 (GRIYEGRVVK…KQGRIRLSMK (69 aa)).

This sequence belongs to the polyribonucleotide nucleotidyltransferase family. Component of the RNA degradosome, which is a multiprotein complex involved in RNA processing and mRNA degradation. Mg(2+) is required as a cofactor.

It is found in the cytoplasm. The enzyme catalyses RNA(n+1) + phosphate = RNA(n) + a ribonucleoside 5'-diphosphate. Involved in mRNA degradation. Catalyzes the phosphorolysis of single-stranded polyribonucleotides processively in the 3'- to 5'-direction. The chain is Polyribonucleotide nucleotidyltransferase from Thioalkalivibrio sulfidiphilus (strain HL-EbGR7).